Reading from the N-terminus, the 189-residue chain is Elongation factor P (189 aa).

Belongs to the elongation factor P family.

The protein resides in the cytoplasm. It participates in protein biosynthesis; polypeptide chain elongation. Involved in peptide bond synthesis. Stimulates efficient translation and peptide-bond synthesis on native or reconstituted 70S ribosomes in vitro. Probably functions indirectly by altering the affinity of the ribosome for aminoacyl-tRNA, thus increasing their reactivity as acceptors for peptidyl transferase. The chain is Elongation factor P from Campylobacter fetus subsp. fetus (strain 82-40).